An 808-amino-acid chain; its full sequence is Sucrose synthase 1 (808 aa).

Positions 277 to 754 are GT-B glycosyltransferase; sequence MVFNVVILSP…GLQRIEEKYT (478 aa).

Belongs to the glycosyltransferase 1 family. Plant sucrose synthase subfamily. In terms of assembly, homotetramer. Expressed in the phloem of leaves and in roots. Detected in the whole plant but more precisely confined to the vasculature in cotyledons, mature leaves and siliques.

It catalyses the reaction an NDP-alpha-D-glucose + D-fructose = a ribonucleoside 5'-diphosphate + sucrose + H(+). In terms of biological role, sucrose-cleaving enzyme that provides UDP-glucose and fructose for various metabolic pathways. The polypeptide is Sucrose synthase 1 (SUS1) (Arabidopsis thaliana (Mouse-ear cress)).